Here is a 175-residue protein sequence, read N- to C-terminus: ADP-ribosylation factor 6 (175 aa).

Residue Gly-2 is the site of N-myristoyl glycine attachment. Lys-3 carries the N6-myristoyl lysine lipid modification. GTP contacts are provided by residues 23-28, 41-44, 63-67, 122-125, and 155-156; these read AAGKTT, TIPT, DVGGQ, NKQD, and CA.

This sequence belongs to the small GTPase superfamily. Arf family. Interacts (when activated) with GGA1, GGA2 and GGA3; the interaction is required for proper subcellular location of GGA1, GGA2 and GGA3. Interacts with PIP5K1C. Interacts with USP6 (via Rab-GAP TBC domain). Interacts with RAB11FIP3 and RAB11FIP4. Interacts with HERC1. Interacts with ARHGAP21. Interacts with ASAP3; the interaction is stabilized by calcium ions. Interacts with NCS1/FREQ at the plasma membrane. Interacts with TBC1D24. Interacts with ECPAS. Interacts with MICALL1. Interacts with SPAG9 homodimers, forming heterotetramers. Interacts with CYTH3. Interacts with ASAP2. Interacts with UACA. Interacts with KIF23, forming heterodimers and heterotetramers. Interacts with C9orf72. Interacts (GTP-bound form) with TJAP1/PILT. Interacts with PRKAA2. Interacts with CD36 (when palmitoylated); this interaction mediates CD36 transport from the Golgi to the plasma membrane. Interacts with APBB1. In terms of assembly, (Microbial infection) Interacts with the V.cholerae enterotoxin subunit A1; this causes a conformation change so that the toxin can bind NAD and catalyze the ADP-ribosylation of Gs alpha. As to quaternary structure, (Microbial infection) Interacts with EspG from enteropathogenic E.coli. (Microbial infection) Identified in a complex with RAB1A and EspG from enteropathogenic E.coli. In terms of assembly, (Microbial infection) Interacts with human enterovirus 71 protein VP1. Post-translationally, GTP-bound form is myristoylated on Lys-3 by NMT1 and NMT2, allowing ARF6 to remain on membranes during the GTPase cycle, thereby promoting its activity. GDP-bound inactive form is demyristoylated on Lys-3 by SIRT2 at early endosomes or endocytic recycling compartment to allow its efficient activation by a guanine exchange factor (GEF) after GDP release. In terms of tissue distribution, ubiquitous, with higher levels in heart, substantia nigra, and kidney.

The protein resides in the cytoplasm. The protein localises to the cytosol. It is found in the cell membrane. It localises to the endosome membrane. Its subcellular location is the recycling endosome membrane. The protein resides in the cell projection. The protein localises to the filopodium membrane. It is found in the ruffle. It localises to the cleavage furrow. Its subcellular location is the midbody. The protein resides in the midbody ring. The protein localises to the early endosome membrane. It is found in the golgi apparatus. It localises to the trans-Golgi network membrane. It catalyses the reaction GTP + H2O = GDP + phosphate + H(+). Activation is generally mediated by a guanine exchange factor (GEF), while inactivation through hydrolysis of bound GTP is catalyzed by a GTPase activating protein (GAP). Activated by ASAP3. Inactivated by ACAP1 and ACAP2. Activated by NGF via NTRK1. Activated by PRKAA2 through its C-terminal regulatory domain. Its function is as follows. GTP-binding protein involved in protein trafficking that regulates endocytic recycling and cytoskeleton remodeling. GTP-bound form plays an important role in the transport of multiple palmitoylated proteins form the Golgi to the plasma membrane. Required for normal completion of mitotic cytokinesis. Plays a role in the reorganization of the actin cytoskeleton and the formation of stress fibers. Involved in the regulation of dendritic spine development, contributing to the regulation of dendritic branching and filopodia extension. Potentiates the neurite outgrowth in primary neurons by interacting with the molecular adapter APBB1. Plays an important role in membrane trafficking, during junctional remodeling and epithelial polarization. Regulates surface levels of adherens junction proteins such as CDH1. Required for NTRK1 sorting to the recycling pathway from early endosomes. In terms of biological role, (Microbial infection) Functions as an allosteric activator of the cholera toxin catalytic subunit, an ADP-ribosyltransferase. Functionally, (Microbial infection) Plays a key role in the endocytosis of enterovirus 71 and thus viral entry into brain microvascular endothelial cells. The polypeptide is ADP-ribosylation factor 6 (Homo sapiens (Human)).